We begin with the raw amino-acid sequence, 343 residues long: L-threonine 3-dehydrogenase (343 aa).

Position 38 (cysteine 38) interacts with Zn(2+). Catalysis depends on charge relay system residues threonine 40 and histidine 43. Zn(2+) contacts are provided by histidine 63, glutamate 64, cysteine 93, cysteine 96, cysteine 99, and cysteine 107. NAD(+)-binding positions include isoleucine 175, aspartate 195, arginine 200, 262–264 (LGI), and 286–287 (IY).

Belongs to the zinc-containing alcohol dehydrogenase family. Homotetramer. Zn(2+) is required as a cofactor.

The protein resides in the cytoplasm. The catalysed reaction is L-threonine + NAD(+) = (2S)-2-amino-3-oxobutanoate + NADH + H(+). It functions in the pathway amino-acid degradation; L-threonine degradation via oxydo-reductase pathway; glycine from L-threonine: step 1/2. Catalyzes the NAD(+)-dependent oxidation of L-threonine to 2-amino-3-ketobutyrate. This chain is L-threonine 3-dehydrogenase, found in Burkholderia thailandensis (strain ATCC 700388 / DSM 13276 / CCUG 48851 / CIP 106301 / E264).